The primary structure comprises 1179 residues: Integrin alpha-1 (1179 aa).

Positions 1–28 are cleaved as a signal peptide; it reads MVPRRPASLEVTVACIWLLTVILGVCIS. Residues 29-1141 are Extracellular-facing; it reads FNVDVKNSMS…SKDGLPGRVP (1113 aa). One copy of the FG-GAP 1 repeat lies at 30–91; it reads NVDVKNSMSF…CPVGRERSMP (62 aa). Cysteine 82 and cysteine 92 are oxidised to a cystine. 9 N-linked (GlcNAc...) asparagine glycosylation sites follow: asparagine 100, asparagine 105, asparagine 112, asparagine 217, asparagine 317, asparagine 341, asparagine 402, asparagine 418, and asparagine 459. One copy of the FG-GAP 2 repeat lies at 101-160; that stretch reads TSIPNVTEIKENMTFGSTLVTNPKGGFLACGPLYAYRCGHLHYTTGICSDVSPTFQVVNS. A VWFA domain is found at 175–364; it reads IVLDGSNSIY…LGERIFALEA (190 aa). One copy of the FG-GAP 3 repeat lies at 365 to 417; that stretch reads TADQSAASFEMEMSQTGFSAHYSQDWVMLGAVGAYDWNGTVVMQKANQIVIPH. FG-GAP repeat units lie at residues 422–474, 475–537, 556–614, and 618–678; these read QTEP…DGDV, NILQ…RFEY, SCTK…TIRK, and QRIP…FEPN. 4 residues coordinate Ca(2+): aspartate 497, aspartate 499, aspartate 501, and aspartate 505. A glycan (N-linked (GlcNAc...) asparagine) is linked at asparagine 531. Residues aspartate 579, asparagine 581, aspartate 583, aspartate 587, aspartate 641, asparagine 643, aspartate 645, and aspartate 649 each coordinate Ca(2+). A disulfide bridge links cysteine 687 with cysteine 696. N-linked (GlcNAc...) asparagine glycans are attached at residues asparagine 698, asparagine 747, and asparagine 779. An intrachain disulfide couples cysteine 702 to cysteine 755. Cysteine 807 and cysteine 813 are oxidised to a cystine. Residues asparagine 839, asparagine 882, asparagine 907, asparagine 938, asparagine 965, asparagine 973, and asparagine 1007 are each glycosylated (N-linked (GlcNAc...) asparagine). Cysteine 877 and cysteine 885 form a disulfide bridge. Disulfide bonds link cysteine 1029–cysteine 1062 and cysteine 1065–cysteine 1072. Asparagine 1083, asparagine 1102, and asparagine 1113 each carry an N-linked (GlcNAc...) asparagine glycan. The chain crosses the membrane as a helical span at residues 1142–1164; it reads LWVILLSAFAGLLLLMLLILALW. Over 1165–1179 the chain is Cytoplasmic; it reads KIGFFKRPLKKKMEK. Positions 1167–1171 match the GFFKR motif motif; sequence GFFKR.

This sequence belongs to the integrin alpha chain family. As to quaternary structure, heterodimer of an alpha and a beta subunit. Alpha-1 associates with beta-1. Interacts with RAB21. Interacts (via cytoplasmic domain) with PTPN2; activates PTPN2 phosphatase activity towards EGFR and negatively regulates EGF signaling.

The protein resides in the membrane. Its function is as follows. Integrin alpha-1/beta-1 is a receptor for laminin and collagen. It recognizes the proline-hydroxylated sequence G-F-P-G-E-R in collagen. Involved in anchorage-dependent, negative regulation of EGF-stimulated cell growth. The polypeptide is Integrin alpha-1 (Itga1) (Mus musculus (Mouse)).